The sequence spans 39 residues: Photosystem II reaction center protein J (39 aa).

The chain crosses the membrane as a helical span at residues 9 to 29 (LWLVATVGGIAVITVLGIFIY).

Belongs to the PsbJ family. In terms of assembly, PSII is composed of 1 copy each of membrane proteins PsbA, PsbB, PsbC, PsbD, PsbE, PsbF, PsbH, PsbI, PsbJ, PsbK, PsbL, PsbM, PsbT, PsbX, PsbY, PsbZ, Psb30/Ycf12, at least 3 peripheral proteins of the oxygen-evolving complex and a large number of cofactors. It forms dimeric complexes.

The protein localises to the plastid. It localises to the chloroplast thylakoid membrane. Functionally, one of the components of the core complex of photosystem II (PSII). PSII is a light-driven water:plastoquinone oxidoreductase that uses light energy to abstract electrons from H(2)O, generating O(2) and a proton gradient subsequently used for ATP formation. It consists of a core antenna complex that captures photons, and an electron transfer chain that converts photonic excitation into a charge separation. In Gracilaria tenuistipitata var. liui (Red alga), this protein is Photosystem II reaction center protein J.